The chain runs to 840 residues: DNA helicase MCM8 (840 aa).

The interval 16 to 54 (QSWKRGRGGGNFSGKWREREHRPDLSKTTGKRTSEQTPQ) is disordered. The segment covering 30–40 (KWREREHRPDL) has biased composition (basic and acidic residues). The MCM domain occupies 402-609 (LFKLIVNSLC…HHDHLLSEHV (208 aa)). 454–461 (GDPGLGKS) contributes to the ATP binding site. A Phosphoserine modification is found at S630.

This sequence belongs to the MCM family. In terms of assembly, component of the MCM8-MCM9 complex, which forms a hexamer composed of MCM8 and MCM9. Interacts with the DNA mismatch repair (MMR) complex composed at least of MSH2, MSH3, MSH6, PMS1 and MLH1. Interacts with RAD51; the interaction recruits RAD51 to DNA damage sites. Interacts with the MRN complex composed of MRE11, RAD50 and NBN/NBS1. Interacts with CDC6 and ORC2. Interacts with HROB; the interaction recruits the MCM8-MCM9 complex to DNA damage sites. In terms of tissue distribution, highest levels in placenta, lung and pancreas. Low levels in skeletal muscle and kidney. Expressed in various tumors with highest levels in colon and lung cancers.

It localises to the nucleus. Its subcellular location is the chromosome. It catalyses the reaction ATP + H2O = ADP + phosphate + H(+). Functionally, component of the MCM8-MCM9 complex, a complex involved in the repair of double-stranded DNA breaks (DBSs) and DNA interstrand cross-links (ICLs) by homologous recombination (HR). Required for DNA resection by the MRE11-RAD50-NBN/NBS1 (MRN) complex by recruiting the MRN complex to the repair site and by promoting the complex nuclease activity. Probably by regulating the localization of the MNR complex, indirectly regulates the recruitment of downstream effector RAD51 to DNA damage sites including DBSs and ICLs. The MCM8-MCM9 complex is dispensable for DNA replication and S phase progression. However, may play a non-essential for DNA replication: may be involved in the activation of the prereplicative complex (pre-RC) during G(1) phase by recruiting CDC6 to the origin recognition complex (ORC). Probably by regulating HR, plays a key role during gametogenesis. Stabilizes MCM9 protein. The polypeptide is DNA helicase MCM8 (MCM8) (Homo sapiens (Human)).